A 635-amino-acid chain; its full sequence is 1-deoxy-D-xylulose-5-phosphate synthase (635 aa).

Thiamine diphosphate is bound by residues His74 and 115 to 117; that span reads AHS. Asp146 contacts Mg(2+). Residues 147–148, Asn176, Tyr283, and Glu365 contribute to the thiamine diphosphate site; that span reads GA. Asn176 lines the Mg(2+) pocket.

It belongs to the transketolase family. DXPS subfamily. Homodimer. Mg(2+) is required as a cofactor. The cofactor is thiamine diphosphate.

The enzyme catalyses D-glyceraldehyde 3-phosphate + pyruvate + H(+) = 1-deoxy-D-xylulose 5-phosphate + CO2. It functions in the pathway metabolic intermediate biosynthesis; 1-deoxy-D-xylulose 5-phosphate biosynthesis; 1-deoxy-D-xylulose 5-phosphate from D-glyceraldehyde 3-phosphate and pyruvate: step 1/1. Its function is as follows. Catalyzes the acyloin condensation reaction between C atoms 2 and 3 of pyruvate and glyceraldehyde 3-phosphate to yield 1-deoxy-D-xylulose-5-phosphate (DXP). The protein is 1-deoxy-D-xylulose-5-phosphate synthase of Polaromonas sp. (strain JS666 / ATCC BAA-500).